The primary structure comprises 730 residues: Dynein axonemal intermediate chain 7 (730 aa).

A compositionally biased stretch (basic residues) spans 1–14 (MAPKSKKAPSKKKM). The segment at 1 to 20 (MAPKSKKAPSKKKMTKAERL) is disordered.

The protein belongs to the DNAI7 family. As to quaternary structure, part of the multisubunit axonemal dynein complex formed at least of two heavy chains and a number of intermediate and light chains. Interacts with tubulin. Associates with microtubule. Ubiquitinated. Ubiquitination leads to its degradation through the 26S proteasome. Ubiquitin-proteasome-mediated DNAI7 degradation occurs in mitosis. In terms of tissue distribution, high expressed in lung, kidney, and testis.

Its subcellular location is the cell projection. It is found in the cilium. The protein localises to the cytoplasm. In terms of biological role, via its association with the multisubunit axonemal dynein complex, is potentially involved in the regulation of cilia function. May also act as a cell cycle regulator. This Mus musculus (Mouse) protein is Dynein axonemal intermediate chain 7 (Dnai7).